The primary structure comprises 157 residues: Phosphopantetheine adenylyltransferase (157 aa).

Position 8 (Ser8) interacts with substrate. ATP contacts are provided by residues 8–9 (SF) and His16. Positions 40, 72, and 86 each coordinate substrate. ATP-binding positions include 87–89 (GLR), Glu97, and 122–128 (HSFLSSS).

Belongs to the bacterial CoaD family. Homohexamer. Requires Mg(2+) as cofactor.

Its subcellular location is the cytoplasm. The catalysed reaction is (R)-4'-phosphopantetheine + ATP + H(+) = 3'-dephospho-CoA + diphosphate. Its pathway is cofactor biosynthesis; coenzyme A biosynthesis; CoA from (R)-pantothenate: step 4/5. Functionally, reversibly transfers an adenylyl group from ATP to 4'-phosphopantetheine, yielding dephospho-CoA (dPCoA) and pyrophosphate. This chain is Phosphopantetheine adenylyltransferase, found in Prochlorococcus marinus (strain MIT 9303).